Reading from the N-terminus, the 99-residue chain is MNTPAARPDRYQSFAHIPCDAMALKLLTHLEQLLQAEDTLEPFWQLFLQKAAIAKQPQPGQADALKLICSNSYYIFDLFAAQQDQAGEAMMDELEYQCC.

This sequence belongs to the CowN family.

Functionally, is required to sustain N(2)-dependent growth in the presence of low levels of carbon monoxide (CO). Probably acts by protecting the N(2) fixation ability of the nitrogenase complex, which is inactivated in the presence of CO. The chain is N(2)-fixation sustaining protein CowN from Magnetococcus marinus (strain ATCC BAA-1437 / JCM 17883 / MC-1).